Reading from the N-terminus, the 206-residue chain is Holliday junction branch migration complex subunit RuvA (206 aa).

The segment at 1–64 (MIAKLTGLLD…EDNIQLFGFA (64 aa)) is domain I. The segment at 65 to 143 (DTEERDWFRL…SFGAPAPAAA (79 aa)) is domain II. Residues 144–154 (TAGKGGAAPAG) form a flexible linker region. Residues 154-206 (GPAGAVADAVSALVNLGYRRVEAFTAVNAVAQRLGPEAGVSDLIRAGLKELSP) form a domain III region.

Belongs to the RuvA family. In terms of assembly, homotetramer. Forms an RuvA(8)-RuvB(12)-Holliday junction (HJ) complex. HJ DNA is sandwiched between 2 RuvA tetramers; dsDNA enters through RuvA and exits via RuvB. An RuvB hexamer assembles on each DNA strand where it exits the tetramer. Each RuvB hexamer is contacted by two RuvA subunits (via domain III) on 2 adjacent RuvB subunits; this complex drives branch migration. In the full resolvosome a probable DNA-RuvA(4)-RuvB(12)-RuvC(2) complex forms which resolves the HJ.

The protein resides in the cytoplasm. The RuvA-RuvB-RuvC complex processes Holliday junction (HJ) DNA during genetic recombination and DNA repair, while the RuvA-RuvB complex plays an important role in the rescue of blocked DNA replication forks via replication fork reversal (RFR). RuvA specifically binds to HJ cruciform DNA, conferring on it an open structure. The RuvB hexamer acts as an ATP-dependent pump, pulling dsDNA into and through the RuvAB complex. HJ branch migration allows RuvC to scan DNA until it finds its consensus sequence, where it cleaves and resolves the cruciform DNA. The polypeptide is Holliday junction branch migration complex subunit RuvA (Rhodospirillum centenum (strain ATCC 51521 / SW)).